The following is a 192-amino-acid chain: MLKKTLLGLTAGALLLNASSALAANYKIDIPGQHAFIGFRIQHLGYSWLYGTFKDFDGSFTFDEQNPAENKVNVTIKIASLDTNHAERDKHLRSKDYFNTEKYPEAKFTSTEVKKEGEKYVVTGDLTLNGVTKPVILNAELMGEGKDPWGGYRAGFEASGKIKLKDFNFKADLGPKSQEADLLISIEGVREK.

A signal peptide spans 1-23 (MLKKTLLGLTAGALLLNASSALA).

This sequence belongs to the UPF0312 family. Type 1 subfamily.

The protein resides in the periplasm. The protein is UPF0312 protein plu2095 of Photorhabdus laumondii subsp. laumondii (strain DSM 15139 / CIP 105565 / TT01) (Photorhabdus luminescens subsp. laumondii).